Reading from the N-terminus, the 216-residue chain is Ribosomal RNA small subunit methyltransferase G (216 aa).

Residues G73, L78, 124 to 125 (AE), and R139 contribute to the S-adenosyl-L-methionine site.

It belongs to the methyltransferase superfamily. RNA methyltransferase RsmG family.

It is found in the cytoplasm. Its function is as follows. Specifically methylates the N7 position of guanine in position 518 of 16S rRNA. The chain is Ribosomal RNA small subunit methyltransferase G from Paenarthrobacter aurescens (strain TC1).